Here is a 589-residue protein sequence, read N- to C-terminus: Pyruvate kinase (589 aa).

A substrate-binding site is contributed by R32. Residues N34, S36, D66, and T67 each contribute to the K(+) site. 34 to 37 (NFSH) contacts ATP. 2 residues coordinate ATP: R73 and K157. A Mg(2+)-binding site is contributed by E223. 3 residues coordinate substrate: G246, D247, and T279. D247 contributes to the Mg(2+) binding site.

The protein belongs to the pyruvate kinase family. It in the C-terminal section; belongs to the PEP-utilizing enzyme family. Homotetramer. Mg(2+) is required as a cofactor. K(+) serves as cofactor.

It catalyses the reaction pyruvate + ATP = phosphoenolpyruvate + ADP + H(+). It participates in carbohydrate degradation; glycolysis; pyruvate from D-glyceraldehyde 3-phosphate: step 5/5. Strongly activated by glucose-6-phosphate, ribose-5-phosphate and fructose-6-phosphate. Weak activator AMP and weak inhibitor fructose-1,6-bisphosphate can act as strong inhibitors in the presence of strong activators. This chain is Pyruvate kinase (pyk), found in Lactobacillus delbrueckii subsp. bulgaricus.